Reading from the N-terminus, the 138-residue chain is Cytochrome b5 (138 aa).

The region spanning 14 to 90 is the Cytochrome b5 heme-binding domain; it reads GRYYRLEEVQ…SETFIIGELH (77 aa). Heme-binding residues include H49 and H73. The helical transmembrane segment at 114–136 threads the bilayer; it reads SWSNWVIPAIAAIIVALMYRSYM.

It belongs to the cytochrome b5 family.

Its subcellular location is the endoplasmic reticulum membrane. It is found in the microsome membrane. Cytochrome b5 is a membrane-bound hemoprotein functioning as an electron carrier for several membrane-bound oxygenases. The polypeptide is Cytochrome b5 (CYB5A) (Gallus gallus (Chicken)).